The primary structure comprises 313 residues: MKILLANPRGFCAGVDRAISIVERALEMYQPPIYVRHEVVHNRFVVEGLKQRGAIFVEELSEVPDDNIVIFSAHGVSQAVRNEAKERQLTVFDATCPLVTKVHMEVARASRRSVEVVLIGHAGHPEVEGTMGQYASEDGGMYLVEKPEDVEKLQVKDPSNLHYVSQTTLSVDETADVIDQLRKVFPEIQGPRKDDICYATQNRQDAVREMAESVDVMIVVGSKNSSNSNRLRELSEKLGTPGFLTDCPEDVQPVWFEGKTKVGVTAGASAPEDLVNQIISRIQALIGGDVEELSGREENMFFEVPRELQVKNI.

Cys-12 contributes to the [4Fe-4S] cluster binding site. Residues His-41 and His-74 each coordinate (2E)-4-hydroxy-3-methylbut-2-enyl diphosphate. The dimethylallyl diphosphate site is built by His-41 and His-74. Positions 41 and 74 each coordinate isopentenyl diphosphate. Cys-96 is a binding site for [4Fe-4S] cluster. Residue His-124 coordinates (2E)-4-hydroxy-3-methylbut-2-enyl diphosphate. His-124 is a binding site for dimethylallyl diphosphate. Isopentenyl diphosphate is bound at residue His-124. Glu-126 functions as the Proton donor in the catalytic mechanism. Thr-167 is a (2E)-4-hydroxy-3-methylbut-2-enyl diphosphate binding site. Cys-197 contributes to the [4Fe-4S] cluster binding site. The (2E)-4-hydroxy-3-methylbut-2-enyl diphosphate site is built by Ser-225, Ser-226, Asn-227, and Ser-269. Ser-225, Ser-226, Asn-227, and Ser-269 together coordinate dimethylallyl diphosphate. Residues Ser-225, Ser-226, Asn-227, and Ser-269 each contribute to the isopentenyl diphosphate site.

Belongs to the IspH family. [4Fe-4S] cluster serves as cofactor.

The enzyme catalyses isopentenyl diphosphate + 2 oxidized [2Fe-2S]-[ferredoxin] + H2O = (2E)-4-hydroxy-3-methylbut-2-enyl diphosphate + 2 reduced [2Fe-2S]-[ferredoxin] + 2 H(+). The catalysed reaction is dimethylallyl diphosphate + 2 oxidized [2Fe-2S]-[ferredoxin] + H2O = (2E)-4-hydroxy-3-methylbut-2-enyl diphosphate + 2 reduced [2Fe-2S]-[ferredoxin] + 2 H(+). It participates in isoprenoid biosynthesis; dimethylallyl diphosphate biosynthesis; dimethylallyl diphosphate from (2E)-4-hydroxy-3-methylbutenyl diphosphate: step 1/1. It functions in the pathway isoprenoid biosynthesis; isopentenyl diphosphate biosynthesis via DXP pathway; isopentenyl diphosphate from 1-deoxy-D-xylulose 5-phosphate: step 6/6. Catalyzes the conversion of 1-hydroxy-2-methyl-2-(E)-butenyl 4-diphosphate (HMBPP) into a mixture of isopentenyl diphosphate (IPP) and dimethylallyl diphosphate (DMAPP). Acts in the terminal step of the DOXP/MEP pathway for isoprenoid precursor biosynthesis. In Photobacterium profundum (strain SS9), this protein is 4-hydroxy-3-methylbut-2-enyl diphosphate reductase.